The following is a 470-amino-acid chain: Uronate isomerase (470 aa).

The protein belongs to the metallo-dependent hydrolases superfamily. Uronate isomerase family.

The enzyme catalyses D-glucuronate = D-fructuronate. It carries out the reaction aldehydo-D-galacturonate = keto-D-tagaturonate. It functions in the pathway carbohydrate metabolism; pentose and glucuronate interconversion. The sequence is that of Uronate isomerase from Vibrio vulnificus (strain YJ016).